The following is a 278-amino-acid chain: HTH-type transcriptional activator RhaS (278 aa).

Positions 174–272 (NLLLAWLEDH…NWSPRDIRQG (99 aa)) constitute an HTH araC/xylS-type domain. 2 DNA-binding regions (H-T-H motif) span residues 191-212 (DAVADQFSLSLRTLHRQLKQQT) and 239-262 (VTDIAYRCGFSDSNHFSTLFRREF).

Binds DNA as a dimer.

The protein resides in the cytoplasm. Activates expression of the rhaBAD and rhaT operons. The protein is HTH-type transcriptional activator RhaS of Escherichia coli O81 (strain ED1a).